A 689-amino-acid chain; its full sequence is Elongation factor G (689 aa).

The tr-type G domain occupies 8-283; sequence SKCRNIGIMA…AVVDFLPAPN (276 aa). Residues 17-24, 81-85, and 135-138 contribute to the GTP site; these read AHIDAGKT, DTPGH, and NKMD.

This sequence belongs to the TRAFAC class translation factor GTPase superfamily. Classic translation factor GTPase family. EF-G/EF-2 subfamily.

The protein localises to the cytoplasm. In terms of biological role, catalyzes the GTP-dependent ribosomal translocation step during translation elongation. During this step, the ribosome changes from the pre-translocational (PRE) to the post-translocational (POST) state as the newly formed A-site-bound peptidyl-tRNA and P-site-bound deacylated tRNA move to the P and E sites, respectively. Catalyzes the coordinated movement of the two tRNA molecules, the mRNA and conformational changes in the ribosome. This is Elongation factor G from Ehrlichia ruminantium (strain Welgevonden).